We begin with the raw amino-acid sequence, 296 residues long: Magnetosome protein MamB (296 aa).

Over methionine 1 to glutamate 12 the chain is Cytoplasmic. The transmembrane domain (TMD) stretch occupies residues methionine 1–glutamate 214. A helical transmembrane segment spans residues valine 13–leucine 33. The Lumenal portion of the chain corresponds to methionine 34 to serine 83. Residues serine 84–methionine 104 form a helical membrane-spanning segment. The Cytoplasmic segment spans residues lysine 105–glutamate 112. Residues alanine 113 to tyrosine 133 traverse the membrane as a helical segment. Residues arginine 134 to alanine 164 lie on the Lumenal side of the membrane. Residues valine 165 to isoleucine 185 form a helical membrane-spanning segment. The Cytoplasmic segment spans residues glycine 186–alanine 296. Residues leucine 215 to alanine 296 form a C-terminal domain (CTD) region.

The protein belongs to the cation diffusion facilitator (CDF) transporter (TC 2.A.4) family. Forms heterodimers with MamM. Probably interacts with MamE.

Its subcellular location is the magnetosome membrane. In terms of biological role, plays a dual, essential role in magnetosome formation; required for magnetosome vesicle formation as well as biomineralization. Probably binds and transports iron. Requires heterodimerization with MamM for stability. This is Magnetosome protein MamB (mamB) from Paramagnetospirillum magneticum (strain ATCC 700264 / AMB-1) (Magnetospirillum magneticum).